The following is a 287-amino-acid chain: Cell division protein ZipA (287 aa).

Position 1 (Met-1) is a topological domain, periplasmic. The helical transmembrane segment at 2–22 (EIGLREWLIVIGIIVIAGILF) threads the bilayer. At 23-287 (DGWRRMRGSK…ERRALTQRRG (265 aa)) the chain is on the cytoplasmic side. The interval 48–140 (DEEETTSAEV…PTQRITEDKD (93 aa)) is disordered. Basic and acidic residues-rich tracts occupy residues 64-77 (LDTHKEPQLDEHDL), 85-104 (REGKRSNSDKRSDKKRKDEP), and 121-140 (GRDDDFPDDKPTQRITEDKD).

It belongs to the ZipA family. As to quaternary structure, interacts with FtsZ via their C-terminal domains.

It localises to the cell inner membrane. In terms of biological role, essential cell division protein that stabilizes the FtsZ protofilaments by cross-linking them and that serves as a cytoplasmic membrane anchor for the Z ring. Also required for the recruitment to the septal ring of downstream cell division proteins. This is Cell division protein ZipA from Pseudomonas syringae pv. syringae (strain B728a).